The following is a 360-amino-acid chain: MASSSSNRQFSHRNANTFLTYPKCPENPEIACQMIWELVVRWIPKYILCAREAHKDGSLHLHALLQTEKPVRISDSRFFDINGFHPNIQSAKSVNRVRDYILKEPLAVFERGTFIPRKSPFLGKSDSEVKEKKPSKDEIMRDIISHSTSKEEYLSMIQKELPFDWSTKLQYFEYSANKLFPEIQEEFTNPHPPSSPDLLCNESINDWLQPNIFQSSDERSRKQSLYIVGPTRTGKSTWARSLGVHNYWQNNVDWSSYNEDAIYNIVDDIPFKFCPCWKQLVGCQRDFIVNPKYGKKKKVQKKSKPTIILANSDEDWMKEMTPGQLEYFEANCIIYIMSPGEKWYSPPELPPTEAVHSDRS.

Residues 11 to 114 (SHRNANTFLT…PLAVFERGTF (104 aa)) form the CRESS-DNA virus Rep endonuclease domain. The RCR-1 motif lies at 18–21 (FLTY). Residues Glu-52, His-60, and His-62 each coordinate a divalent metal cation. Positions 60–62 (HLH) match the RCR-2 motif. Catalysis depends on Tyr-100, which acts as the For DNA cleavage activity. An RCR-3 motif is present at residues 100–103 (YILK). Glu-104 is an a divalent metal cation binding site. Residues 175–187 (SANKLFPEIQEEF) are oligomerization. 229-236 (GPTRTGKS) is an ATP binding site. The segment at 252 to 270 (VDWSSYNEDAIYNIVDDIP) is transactivation. Positions 292 to 303 (KYGKKKKVQKKS) match the Nuclear localization signal motif.

Belongs to the geminiviridae Rep protein family. Homooligomer. Rep binds to repeated DNA motifs (iterons). Forms the O-complex, which is a Rep-DNA complex involved in the initiation of RCR. Part of the C- and V-complexes which are RepA-Rep-DNA complexes involved in the c-sense and v-sense transcription. Requires Mg(2+) as cofactor. It depends on Mn(2+) as a cofactor.

It is found in the host nucleus. Functionally, essential for the replication of viral ssDNA. The closed circular ssDNA genome is first converted to a superhelical dsDNA. Rep binds a specific region at the genome origin of replication. It introduces an endonucleolytic nick within the conserved sequence 5'-TAATATTAC-3' in the intergenic region of the genome present in all geminiviruses, thereby initiating the rolling circle replication (RCR). Following cleavage, binds covalently to the 5'-phosphate of DNA as a tyrosyl ester. The cleavage gives rise to a free 3'-OH that serves as a primer for the cellular DNA polymerase. The polymerase synthesizes the (+) strand DNA by rolling circle mechanism. After one round of replication, a Rep-catalyzed nucleotidyl transfer reaction releases a circular single-stranded virus genome, thereby terminating the replication. Displays origin-specific DNA cleavage, nucleotidyl transferase, ATPase and helicase activities. Acts as an inhibitor of C-sense gene transcription. This is Replication-associated protein from Avena sativa (Oat).